The chain runs to 421 residues: Testin (421 aa).

Residues 92 to 199 form the PET domain; the sequence is MILTNPVAAK…GDVKLPRDMN (108 aa). 2 disordered regions span residues 133-164 and 193-213; these read EKQP…PSKC and KLPR…GGDR. Residues 155–164 are compositionally biased toward basic and acidic residues; sequence PAHDQDPSKC. LIM zinc-binding domains follow at residues 234–297, 299–359, and 362–421; these read YSCY…CDSE, PRCA…NHAV, and QGCH…KMMS.

This sequence belongs to the prickle / espinas / testin family. In terms of assembly, interacts via LIM domain 1 with ZYX. Interacts (via LIM domain 3) with ENAH and VASP. Interacts with ALKBH4, talin, actin, alpha-actinin, GRIP1 and PXN. Interacts (via LIM domain 2) with ACTL7A (via N-terminus). Heterodimer with ACTL7A; the heterodimer interacts with ENAH to form a heterotrimer.

It is found in the cytoplasm. The protein localises to the cell junction. Its subcellular location is the focal adhesion. Functionally, scaffold protein that may play a role in cell adhesion, cell spreading and in the reorganization of the actin cytoskeleton. Plays a role in the regulation of cell proliferation. May act as a tumor suppressor. The protein is Testin (TES) of Muntiacus muntjak (Barking deer).